Reading from the N-terminus, the 570-residue chain is Probable diguanylate cyclase DgcQ (570 aa).

A run of 2 helical transmembrane segments spans residues 20 to 40 and 360 to 380; these read FGPG…STLL and IALT…WGVI. Residues 428–563 form the GGDEF domain; the sequence is QPFSVIQLDL…GRNRICASDA (136 aa). D436 contributes to the Mg(2+) binding site. Residues N444, H449, and D453 each contribute to the substrate site. Mg(2+) is bound at residue E479. E479 (proton acceptor) is an active-site residue.

In terms of assembly, homodimer. Mg(2+) is required as a cofactor.

The protein localises to the cell inner membrane. The catalysed reaction is 2 GTP = 3',3'-c-di-GMP + 2 diphosphate. The protein operates within glycan metabolism; bacterial cellulose biosynthesis. It participates in purine metabolism; 3',5'-cyclic di-GMP biosynthesis. Its function is as follows. Catalyzes the synthesis of cyclic-di-GMP (c-di-GMP) via the condensation of 2 GTP molecules. Cyclic-di-GMP is a second messenger which controls cell surface-associated traits in bacteria. Involved in the regulation of cellulose production. The protein is Probable diguanylate cyclase DgcQ of Salmonella choleraesuis (strain SC-B67).